The following is a 330-amino-acid chain: tRNA U34 carboxymethyltransferase (330 aa).

Carboxy-S-adenosyl-L-methionine contacts are provided by residues Lys-91, Trp-105, Lys-110, Gly-130, 152–154, 181–182, Met-196, Tyr-200, and Arg-315; these read DPS and IE.

The protein belongs to the class I-like SAM-binding methyltransferase superfamily. CmoB family. In terms of assembly, homotetramer.

It catalyses the reaction carboxy-S-adenosyl-L-methionine + 5-hydroxyuridine(34) in tRNA = 5-carboxymethoxyuridine(34) in tRNA + S-adenosyl-L-homocysteine + H(+). In terms of biological role, catalyzes carboxymethyl transfer from carboxy-S-adenosyl-L-methionine (Cx-SAM) to 5-hydroxyuridine (ho5U) to form 5-carboxymethoxyuridine (cmo5U) at position 34 in tRNAs. The polypeptide is tRNA U34 carboxymethyltransferase (Shewanella loihica (strain ATCC BAA-1088 / PV-4)).